Here is a 255-residue protein sequence, read N- to C-terminus: 5'-nucleotidase SurE (255 aa).

Residues Asp16, Asp17, Ser47, and Asn100 each coordinate a divalent metal cation.

The protein belongs to the SurE nucleotidase family. It depends on a divalent metal cation as a cofactor.

The protein resides in the cytoplasm. The enzyme catalyses a ribonucleoside 5'-phosphate + H2O = a ribonucleoside + phosphate. Functionally, nucleotidase that shows phosphatase activity on nucleoside 5'-monophosphates. The polypeptide is 5'-nucleotidase SurE (Vibrio vulnificus (strain CMCP6)).